Consider the following 156-residue polypeptide: Transcription elongation factor GreA (156 aa).

A coiled-coil region spans residues 46–73 (AEYHAAREKQSFIEGRIKELEALLSLAE).

Belongs to the GreA/GreB family.

Its function is as follows. Necessary for efficient RNA polymerase transcription elongation past template-encoded arresting sites. The arresting sites in DNA have the property of trapping a certain fraction of elongating RNA polymerases that pass through, resulting in locked ternary complexes. Cleavage of the nascent transcript by cleavage factors such as GreA or GreB allows the resumption of elongation from the new 3'terminus. GreA releases sequences of 2 to 3 nucleotides. The protein is Transcription elongation factor GreA of Cereibacter sphaeroides (strain ATCC 17025 / ATH 2.4.3) (Rhodobacter sphaeroides).